The sequence spans 603 residues: UvrABC system protein C (603 aa).

Residues 17–94 (TTSGCYKMLN…IKTHKPDYNV (78 aa)) enclose the GIY-YIG domain.

Belongs to the UvrC family. Interacts with UvrB in an incision complex.

It localises to the cytoplasm. Functionally, the UvrABC repair system catalyzes the recognition and processing of DNA lesions. UvrC both incises the 5' and 3' sides of the lesion. The N-terminal half is responsible for the 3' incision and the C-terminal half is responsible for the 5' incision. The polypeptide is UvrABC system protein C (Borreliella burgdorferi (strain ATCC 35210 / DSM 4680 / CIP 102532 / B31) (Borrelia burgdorferi)).